The sequence spans 136 residues: MLSNPKRTRFRKQHRGRMKGISYRGNNICFGRYALQALEPAWITSRQIEAGRRAMTRYARRGGKIWVRIFPDKPVTIRPTETRMGSGKGSPEYWVAVVKPGRILYEMAGVSESIARAAISIAACKMPIRTQFVIAE.

This sequence belongs to the universal ribosomal protein uL16 family. As to quaternary structure, part of the 50S ribosomal subunit.

It is found in the plastid. The protein localises to the chloroplast. The protein is Large ribosomal subunit protein uL16c of Chloranthus spicatus (Chulantree).